Reading from the N-terminus, the 486-residue chain is Cytochrome P450 monooxygenase 1 (486 aa).

A signal peptide spans 1–21 (MSHFLPTLILTSLTLVAYVLA). Asn346 carries an N-linked (GlcNAc...) asparagine glycan. Cys430 contacts heme. N-linked (GlcNAc...) asparagine glycosylation is present at Asn434.

This sequence belongs to the cytochrome P450 family. Requires heme as cofactor.

It participates in mycotoxin biosynthesis. Cytochrome P450 monooxygenase; part of the gene cluster that mediates the biosynthesis of aphidicolin, a specific inhibitor of eukaryotic DNA synthesis and DNA polymerase alpha. The geranylgeranyl pyrophosphate synthase GGS is required for supplying a sufficient amount of geranylgeranyl diphosphate (GGDP), the general precursor of diterpenes. The diterpene synthase ACS then catalyzes the conversion of geranylgeranyl diphosphate to aphidicolan-16-beta-ol via the intermediate syn-copalyldiphosphate (syn-CDP). In addition to aphidicolan-16-beta-ol, the enzyme also produces low levels of amphidicol-15-ene and amphidicol-16-ene. The cytochrome P450 monooxygenase P450-2 then catalyzes the two-step hydroxylation from aphidicolan-16-beta-ol to 3-deoxyaphidicolin via a 17,3-deoxyaphidicolin intermediate. Finally, the cytochrome P450 monooxygenase P450-1 converts 3-deoxyaphidicolin to aphidicolin. This chain is Cytochrome P450 monooxygenase 1 (PbP450-1), found in Neocamarosporium betae (Beet black rot fungus).